A 72-amino-acid polypeptide reads, in one-letter code: Protein kish-A (72 aa).

An N-terminal signal peptide occupies residues 1–26; the sequence is MSAIFNFQSLLTVILLLICTCAYIRS. Topologically, residues 27–53 are extracellular; it reads LAPSLLDRNKTGLLGIFWKCARIGERK. A glycan (N-linked (GlcNAc...) asparagine) is linked at asparagine 35. Residues 54–71 form a helical membrane-spanning segment; sequence SPYVAVCCIVMAFSILFI. Residue glutamine 72 is a topological domain, cytoplasmic.

It belongs to the KISH family.

It localises to the golgi apparatus membrane. Functionally, involved in the early part of the secretory pathway. This Bos taurus (Bovine) protein is Protein kish-A (TMEM167A).